A 93-amino-acid polypeptide reads, in one-letter code: Acylphosphatase (93 aa).

Cys-5 and Cys-49 form a disulfide bridge. Residues Cys-5–Tyr-93 form the Acylphosphatase-like domain. Residue Asn-38 is part of the active site.

It belongs to the acylphosphatase family.

It carries out the reaction an acyl phosphate + H2O = a carboxylate + phosphate + H(+). The sequence is that of Acylphosphatase from Salmonella paratyphi A (strain ATCC 9150 / SARB42).